The chain runs to 598 residues: IQ calmodulin-binding motif-containing protein 1 (598 aa).

The segment at 1-157 (MKPTGTDPRI…SLFWLLGGHV (157 aa)) is interaction with BBS1, BBS8 and BBS9. An interaction with CEP290, BBS1, BBS2, BBS4, BBS5, BBS7, BBS8 and BBS9 region spans residues 287–598 (QEVEEQKLHQ…NLFIGGTKPP (312 aa)). 4 consecutive IQ domains span residues 294 to 317 (LHQAACLIQAYWKGFQTRKRLKKL), 318 to 338 (PSAVIALQRSFRSKRSKMLLE), 387 to 416 (EEKSALIIQKHWRGYRERKNFHQQRQSLIE), and 417 to 437 (YKAAVTLQRAALKFLAKCRKK). Residues 336–373 (LLEINRQKEEEDLKLQLQLQRQRAMRLSRELQLSMLEI) are a coiled coil. Positions 530–598 (AEGKEPELFL…NLFIGGTKPP (69 aa)) are interaction with BBS1, BBS2, BBS4, BBS7, BBS8 and BBS9. The residue at position 572 (Ser-572) is a Phosphoserine.

Interacts with CEP290/NPHP6; IQCB1/NPHP5 and CEP290 are proposed to form a functional NPHP5-6 module/NPHP6; localized to the centrosome. Interacts with calmodulin, ATXN10. Interacts with NPHP1, INVS, NPHP4 and RPGRIP1L; these interactions likely require additional interactors. Associates with the BBSome complex; interacts with BBS1, BBS2, BBS4, BBS5, BBS7, BBS8 and BBS9. Ubiquitously expressed in fetal and adult tissues. Localized to the outer segments and connecting cilia of photoreceptor cells. Up-regulated in a number of primary colorectal and gastric tumors.

It localises to the cytoplasm. It is found in the cytoskeleton. The protein resides in the microtubule organizing center. The protein localises to the centrosome. Its subcellular location is the centriole. In terms of biological role, involved in ciliogenesis. The function in an early step in cilia formation depends on its association with CEP290/NPHP6. Involved in regulation of the BBSome complex integrity, specifically for presence of BBS2 and BBS5 in the complex, and in ciliary targeting of selected BBSome cargos. May play a role in controlling entry of the BBSome complex to cilia possibly implicating CEP290/NPHP6. This is IQ calmodulin-binding motif-containing protein 1 (IQCB1) from Homo sapiens (Human).